We begin with the raw amino-acid sequence, 596 residues long: Aspartate--tRNA(Asp/Asn) ligase (596 aa).

An L-aspartate-binding site is contributed by Glu-175. Residues 199–202 (QQYK) are aspartate. The L-aspartate site is built by Arg-221 and His-454. 221–223 (RDE) is a binding site for ATP. Residue Glu-488 participates in ATP binding. Arg-495 is a binding site for L-aspartate. Residue 540 to 543 (GIDR) coordinates ATP.

The protein belongs to the class-II aminoacyl-tRNA synthetase family. Type 1 subfamily. In terms of assembly, homodimer.

Its subcellular location is the cytoplasm. The enzyme catalyses tRNA(Asx) + L-aspartate + ATP = L-aspartyl-tRNA(Asx) + AMP + diphosphate. Its function is as follows. Aspartyl-tRNA synthetase with relaxed tRNA specificity since it is able to aspartylate not only its cognate tRNA(Asp) but also tRNA(Asn). Reaction proceeds in two steps: L-aspartate is first activated by ATP to form Asp-AMP and then transferred to the acceptor end of tRNA(Asp/Asn). The sequence is that of Aspartate--tRNA(Asp/Asn) ligase from Rhizobium johnstonii (strain DSM 114642 / LMG 32736 / 3841) (Rhizobium leguminosarum bv. viciae).